Reading from the N-terminus, the 453-residue chain is Odorant receptor 83a (453 aa).

The Cytoplasmic portion of the chain corresponds to 1 to 28; it reads MKSTFKEERIKDDSKRRDLFVFVRQTMC. Residues 29–49 form a helical membrane-spanning segment; it reads IAAMYPFGYYVNGSGVLAVLV. Residues 50–85 are Extracellular-facing; it reads RFCDLTYELFNYFVSVHIAGLYICTIYINYGQGDLD. Residues 86-106 traverse the membrane as a helical segment; sequence FFVNCLIQTIIYLWTIAMKLY. The Cytoplasmic portion of the chain corresponds to 107–148; sequence FRRFRPGLLNTILSNINDEYETRSAVGFSFVTMAGSYRMSKL. The helical transmembrane segment at 149–169 threads the bilayer; the sequence is WIKTYVYCCYIGTIFWLALPI. Over 170-203 the chain is Extracellular; it reads AYRDRSLPLACWYPFDYTQPGVYEVVFLLQAMGQ. Residues 204–224 form a helical membrane-spanning segment; that stretch reads IQVAASFASSSGLHMVLCVLI. At 225–322 the chain is on the cytoplasmic side; the sequence is SGQYDVLFCS…ALKKIESFYS (98 aa). A helical membrane pass occupies residues 323–343; the sequence is PIWFVKIGEVTFLMCLVAFVS. At 344-359 the chain is on the extracellular side; it reads TKSTAANSFMRMVSLG. Residues 360-380 form a helical membrane-spanning segment; sequence QYLLLVLYELFIICYFADIVF. Residues 381 to 408 are Cytoplasmic-facing; that stretch reads QNSQRCGEALWRSPWQRHLKDVRSDYMF. A helical transmembrane segment spans residues 409–429; it reads FMLNSRRQFQLTAGKISNLNV. Over 430 to 453 the chain is Extracellular; it reads DRFRGTITTAFSFLTLLQKMDARE.

Belongs to the insect chemoreceptor superfamily. Heteromeric odorant receptor channel (TC 1.A.69) family. Or2a subfamily. Interacts with Orco. Complexes exist early in the endomembrane system in olfactory sensory neurons (OSNs), coupling these complexes to the conserved ciliary trafficking pathway.

The protein resides in the cell membrane. Its function is as follows. Odorant receptor which mediates acceptance or avoidance behavior, depending on its substrates. The odorant receptor repertoire encodes a large collection of odor stimuli that vary widely in identity, intensity, and duration. May form a complex with Orco to form odorant-sensing units, providing sensitive and prolonged odorant signaling and calcium permeability. Involved in the behavioral responses to pentanol, ethyl acetate, and propyl acetate. This Drosophila melanogaster (Fruit fly) protein is Odorant receptor 83a (Or83a).